The following is a 260-amino-acid chain: Thiazole synthase (260 aa).

The active-site Schiff-base intermediate with DXP is the Lys-102. 1-deoxy-D-xylulose 5-phosphate is bound by residues Gly-163, 189-190, and 211-212; these read AG and NT.

Belongs to the ThiG family. As to quaternary structure, homotetramer. Forms heterodimers with either ThiH or ThiS.

It is found in the cytoplasm. The catalysed reaction is [ThiS sulfur-carrier protein]-C-terminal-Gly-aminoethanethioate + 2-iminoacetate + 1-deoxy-D-xylulose 5-phosphate = [ThiS sulfur-carrier protein]-C-terminal Gly-Gly + 2-[(2R,5Z)-2-carboxy-4-methylthiazol-5(2H)-ylidene]ethyl phosphate + 2 H2O + H(+). It functions in the pathway cofactor biosynthesis; thiamine diphosphate biosynthesis. In terms of biological role, catalyzes the rearrangement of 1-deoxy-D-xylulose 5-phosphate (DXP) to produce the thiazole phosphate moiety of thiamine. Sulfur is provided by the thiocarboxylate moiety of the carrier protein ThiS. In vitro, sulfur can be provided by H(2)S. The polypeptide is Thiazole synthase (Geobacter sulfurreducens (strain ATCC 51573 / DSM 12127 / PCA)).